The chain runs to 308 residues: Cell division protein FtsQ (308 aa).

The segment at 1 to 28 (MQSLSFPPNRRTPRLAPPRRETGRRDPA) is disordered. Topologically, residues 1–46 (MQSLSFPPNRRTPRLAPPRRETGRRDPAPSRWAYRAQRLWLTPMFR) are cytoplasmic. Residues 18-28 (PRRETGRRDPA) show a composition bias toward basic and acidic residues. The chain crosses the membrane as a helical span at residues 47–67 (TALRVGLPIVGVLLVVALIFA). Residues 68–308 (SADRRAAMAG…RGIDTSGSDL (241 aa)) lie on the Periplasmic side of the membrane. The POTRA domain occupies 92 to 160 (FMVTLLSVDG…GLLEVRVTER (69 aa)).

It belongs to the FtsQ/DivIB family. FtsQ subfamily.

The protein resides in the cell inner membrane. In terms of biological role, essential cell division protein. This chain is Cell division protein FtsQ, found in Cereibacter sphaeroides (strain ATCC 17023 / DSM 158 / JCM 6121 / CCUG 31486 / LMG 2827 / NBRC 12203 / NCIMB 8253 / ATH 2.4.1.) (Rhodobacter sphaeroides).